Reading from the N-terminus, the 252-residue chain is Imidazole glycerol phosphate synthase subunit HisF (252 aa).

Residues aspartate 11 and aspartate 130 contribute to the active site.

The protein belongs to the HisA/HisF family. In terms of assembly, heterodimer of HisH and HisF.

The protein localises to the cytoplasm. The enzyme catalyses 5-[(5-phospho-1-deoxy-D-ribulos-1-ylimino)methylamino]-1-(5-phospho-beta-D-ribosyl)imidazole-4-carboxamide + L-glutamine = D-erythro-1-(imidazol-4-yl)glycerol 3-phosphate + 5-amino-1-(5-phospho-beta-D-ribosyl)imidazole-4-carboxamide + L-glutamate + H(+). Its pathway is amino-acid biosynthesis; L-histidine biosynthesis; L-histidine from 5-phospho-alpha-D-ribose 1-diphosphate: step 5/9. In terms of biological role, IGPS catalyzes the conversion of PRFAR and glutamine to IGP, AICAR and glutamate. The HisF subunit catalyzes the cyclization activity that produces IGP and AICAR from PRFAR using the ammonia provided by the HisH subunit. The chain is Imidazole glycerol phosphate synthase subunit HisF from Paramagnetospirillum magneticum (strain ATCC 700264 / AMB-1) (Magnetospirillum magneticum).